The chain runs to 432 residues: Trigger factor (432 aa).

The PPIase FKBP-type domain occupies 161 to 246; that stretch reads EDRVTIDFTG…LKKVEERELP (86 aa).

This sequence belongs to the FKBP-type PPIase family. Tig subfamily. In terms of assembly, homodimer and monomer. In vivo most of the ribosomes are in complex with monomeric TF. Uncomplexed TF, however, is in a monomer-dimer equilibrium with approximately two thirds of TF existing in a dimeric state.

It localises to the cytoplasm. The catalysed reaction is [protein]-peptidylproline (omega=180) = [protein]-peptidylproline (omega=0). In terms of biological role, involved in protein export. Acts as a chaperone by maintaining the newly synthesized protein in an open conformation. Functions as a peptidyl-prolyl cis-trans isomerase. The chain is Trigger factor from Shigella boydii serotype 18 (strain CDC 3083-94 / BS512).